The sequence spans 249 residues: MLQTLKTLTLIPARMASTRLPNKPLADICGKPMIVHVADRAAAAKLGRTVVATDSEEIFAIVTAHGHEAIMTREDHESGSDRIYEALMKVDPAGEFDAVVNVQGDLPTIDPDIIRRALLPLEDGPADIATLGVEIEEESEKTNPSVVKIVGSPLAGNSRLRALYFTRATAPYGEGPLYHHIGLYAYRRSALERFVKLGPSPLEKREKLEQLRALEAGMRIDVELVRTVPLGVDTQADLDRARILVAQGI.

It belongs to the KdsB family.

It localises to the cytoplasm. The catalysed reaction is 3-deoxy-alpha-D-manno-oct-2-ulosonate + CTP = CMP-3-deoxy-beta-D-manno-octulosonate + diphosphate. Its pathway is nucleotide-sugar biosynthesis; CMP-3-deoxy-D-manno-octulosonate biosynthesis; CMP-3-deoxy-D-manno-octulosonate from 3-deoxy-D-manno-octulosonate and CTP: step 1/1. The protein operates within bacterial outer membrane biogenesis; lipopolysaccharide biosynthesis. Activates KDO (a required 8-carbon sugar) for incorporation into bacterial lipopolysaccharide in Gram-negative bacteria. This Brucella anthropi (strain ATCC 49188 / DSM 6882 / CCUG 24695 / JCM 21032 / LMG 3331 / NBRC 15819 / NCTC 12168 / Alc 37) (Ochrobactrum anthropi) protein is 3-deoxy-manno-octulosonate cytidylyltransferase.